The following is a 311-amino-acid chain: tRNA dimethylallyltransferase (311 aa).

An ATP-binding site is contributed by 13 to 20 (GPTASGKT). Substrate is bound at residue 15–20 (TASGKT). Interaction with substrate tRNA stretches follow at residues 38–41 (DSMQ) and 166–170 (QRGLR).

The protein belongs to the IPP transferase family. As to quaternary structure, monomer. The cofactor is Mg(2+).

It carries out the reaction adenosine(37) in tRNA + dimethylallyl diphosphate = N(6)-dimethylallyladenosine(37) in tRNA + diphosphate. In terms of biological role, catalyzes the transfer of a dimethylallyl group onto the adenine at position 37 in tRNAs that read codons beginning with uridine, leading to the formation of N6-(dimethylallyl)adenosine (i(6)A). The polypeptide is tRNA dimethylallyltransferase (Staphylococcus aureus (strain MSSA476)).